A 90-amino-acid polypeptide reads, in one-letter code: Probable Fe(2+)-trafficking protein (90 aa).

The protein belongs to the Fe(2+)-trafficking protein family.

In terms of biological role, could be a mediator in iron transactions between iron acquisition and iron-requiring processes, such as synthesis and/or repair of Fe-S clusters in biosynthetic enzymes. The sequence is that of Probable Fe(2+)-trafficking protein from Coxiella burnetii (strain CbuG_Q212) (Coxiella burnetii (strain Q212)).